The following is a 145-amino-acid chain: Peptide methionine sulfoxide reductase MsrB (145 aa).

Residues 4-127 (SDELKQRIGE…NSAALKFIPY (124 aa)) enclose the MsrB domain. C116 serves as the catalytic Nucleophile.

This sequence belongs to the MsrB Met sulfoxide reductase family.

The catalysed reaction is L-methionyl-[protein] + [thioredoxin]-disulfide + H2O = L-methionyl-(R)-S-oxide-[protein] + [thioredoxin]-dithiol. This chain is Peptide methionine sulfoxide reductase MsrB, found in Streptococcus pyogenes serotype M3 (strain ATCC BAA-595 / MGAS315).